Consider the following 441-residue polypeptide: 4-hydroxybenzoate polyprenyltransferase, mitochondrial (441 aa).

A mitochondrion-targeting transit peptide spans 1–95 (MLRKLTSNSS…TLGELVLRDY (95 aa)). The next 8 membrane-spanning stretches (helical) occupy residues 129–149 (IGSW…APAG), 154–174 (LWTL…GCTI), 204–224 (AWFF…ELNW), 225–245 (YSIV…LMKR), 246–266 (ITHW…LLGW), 271–291 (GSVM…WTIV), 322–342 (LWLS…GMVC), and 378–398 (FISN…GTLY). The segment at 405 to 441 (AGKSSTTSSSSTSSSSSPSSGLLLAATNHHQPARQAS) is disordered. Positions 408 to 424 (SSTTSSSSTSSSSSPSS) are enriched in low complexity. Over residues 432–441 (NHHQPARQAS) the composition is skewed to polar residues.

This sequence belongs to the UbiA prenyltransferase family. It depends on Mg(2+) as a cofactor.

Its subcellular location is the mitochondrion inner membrane. It carries out the reaction an all-trans-polyprenyl diphosphate + 4-hydroxybenzoate = a 4-hydroxy-3-(all-trans-polyprenyl)benzoate + diphosphate. Its pathway is cofactor biosynthesis; ubiquinone biosynthesis. In terms of biological role, catalyzes the prenylation of para-hydroxybenzoate (PHB) with an all-trans polyprenyl group. Mediates the second step in the final reaction sequence of coenzyme Q (CoQ) biosynthesis, which is the condensation of the polyisoprenoid side chain with PHB, generating the first membrane-bound Q intermediate. This chain is 4-hydroxybenzoate polyprenyltransferase, mitochondrial, found in Aedes aegypti (Yellowfever mosquito).